Reading from the N-terminus, the 289-residue chain is Phosphatidylglycerol--prolipoprotein diacylglyceryl transferase (289 aa).

Helical transmembrane passes span 18–38 (FTIY…YVMA), 54–74 (DFVM…YVIF), 86–106 (VFYI…GVLT), and 116–136 (LSFW…QAIG). Arginine 137 lines the a 1,2-diacyl-sn-glycero-3-phospho-(1'-sn-glycerol) pocket. The next 3 helical transmembrane spans lie at 177–197 (HPTF…LLLL), 205–225 (GELF…IEGM), and 236–256 (LRTA…LWWY).

This sequence belongs to the Lgt family.

The protein localises to the cell membrane. The enzyme catalyses L-cysteinyl-[prolipoprotein] + a 1,2-diacyl-sn-glycero-3-phospho-(1'-sn-glycerol) = an S-1,2-diacyl-sn-glyceryl-L-cysteinyl-[prolipoprotein] + sn-glycerol 1-phosphate + H(+). The protein operates within protein modification; lipoprotein biosynthesis (diacylglyceryl transfer). Catalyzes the transfer of the diacylglyceryl group from phosphatidylglycerol to the sulfhydryl group of the N-terminal cysteine of a prolipoprotein, the first step in the formation of mature lipoproteins. This is Phosphatidylglycerol--prolipoprotein diacylglyceryl transferase from Halalkalibacterium halodurans (strain ATCC BAA-125 / DSM 18197 / FERM 7344 / JCM 9153 / C-125) (Bacillus halodurans).